Here is a 276-residue protein sequence, read N- to C-terminus: Lyso-ornithine lipid O-acyltransferase (276 aa).

The chain crosses the membrane as a helical span at residues L25–R47.

The protein belongs to the 1-acyl-sn-glycerol-3-phosphate acyltransferase family. OlsA subfamily.

The protein resides in the membrane. It carries out the reaction a lyso-ornithine lipid + a fatty acyl-[ACP] = an N(2)-[(3R)-3-(acyloxy)acyl]-L-ornithine lipid + holo-[ACP]. It catalyses the reaction a fatty acyl-[ACP] + a 1-acyl-sn-glycero-3-phosphate = a 1,2-diacyl-sn-glycero-3-phosphate + holo-[ACP]. It participates in lipid metabolism. The protein operates within phospholipid metabolism. Its function is as follows. Catalyzes the second step in the formation of ornithine lipids, which are phosphorus-free membrane lipids. Uses acyl-acyl carrier protein (acyl-AcpP) as an acyl donor and converts lyso-ornithine lipid (LOL) into ornithine lipid (OL). It can also act as an alternate acyl-sn-glycerol-3-phosphate acyltransferase (AGPAT) to ensure glycerophospholipid production. The protein is Lyso-ornithine lipid O-acyltransferase of Rhodobacter capsulatus (strain ATCC BAA-309 / NBRC 16581 / SB1003).